Reading from the N-terminus, the 58-residue chain is Small ribosomal subunit protein eS31 (58 aa).

Zn(2+) is bound by residues C29, C32, C48, and C51. Residues 29–51 (CPRCGSFMAHHLKPVPRWHCGKC) form a C4-type zinc finger.

This sequence belongs to the eukaryotic ribosomal protein eS31 family. As to quaternary structure, part of the 30S ribosomal subunit. The cofactor is Zn(2+).

The protein is Small ribosomal subunit protein eS31 of Ignicoccus hospitalis (strain KIN4/I / DSM 18386 / JCM 14125).